A 353-amino-acid polypeptide reads, in one-letter code: Nicotinate-nucleotide--dimethylbenzimidazole phosphoribosyltransferase (353 aa).

Glutamate 318 (proton acceptor) is an active-site residue.

Belongs to the CobT family.

The catalysed reaction is 5,6-dimethylbenzimidazole + nicotinate beta-D-ribonucleotide = alpha-ribazole 5'-phosphate + nicotinate + H(+). The protein operates within nucleoside biosynthesis; alpha-ribazole biosynthesis; alpha-ribazole from 5,6-dimethylbenzimidazole: step 1/2. Catalyzes the synthesis of alpha-ribazole-5'-phosphate from nicotinate mononucleotide (NAMN) and 5,6-dimethylbenzimidazole (DMB). The sequence is that of Nicotinate-nucleotide--dimethylbenzimidazole phosphoribosyltransferase from Roseiflexus sp. (strain RS-1).